The primary structure comprises 877 residues: Translation initiation factor IF-2 (877 aa).

Residues Pro-66–Pro-115 are compositionally biased toward basic and acidic residues. Disordered regions lie at residues Pro-66–Lys-127, Ser-187–Glu-208, and Glu-241–Glu-290. Basic residues predominate over residues Lys-192–His-201. Polar residues predominate over residues Ala-245–Asn-265. One can recognise a tr-type G domain in the interval Gln-376 to Glu-543. Residues Gly-385 to Thr-392 are G1. Residue Gly-385–Thr-392 coordinates GTP. Residues Gly-410–His-414 form a G2 region. The G3 stretch occupies residues Asp-431–Gly-434. GTP-binding positions include Asp-431 to His-435 and Asn-485 to Asp-488. The interval Asn-485–Asp-488 is G4. The segment at Ser-521–Lys-523 is G5.

The protein belongs to the TRAFAC class translation factor GTPase superfamily. Classic translation factor GTPase family. IF-2 subfamily.

It localises to the cytoplasm. Its function is as follows. One of the essential components for the initiation of protein synthesis. Protects formylmethionyl-tRNA from spontaneous hydrolysis and promotes its binding to the 30S ribosomal subunits. Also involved in the hydrolysis of GTP during the formation of the 70S ribosomal complex. In Campylobacter lari (strain RM2100 / D67 / ATCC BAA-1060), this protein is Translation initiation factor IF-2.